A 37-amino-acid chain; its full sequence is Large ribosomal subunit protein bL36 (37 aa).

Belongs to the bacterial ribosomal protein bL36 family.

In Mesomycoplasma hyopneumoniae (strain 7448) (Mycoplasma hyopneumoniae), this protein is Large ribosomal subunit protein bL36.